We begin with the raw amino-acid sequence, 470 residues long: Negative regulator of sexual conjugation and meiosis (470 aa).

One can recognise a Protein kinase domain in the interval 18–295 (LRFVSIIGAG…ITLPELSTLV (278 aa)). ATP is bound by residues 24–32 (IGAGAYGVV) and Lys-47. The Proton acceptor role is filled by Asp-143. Phosphoserine is present on Ser-469.

It belongs to the protein kinase superfamily. Ser/Thr protein kinase family.

It carries out the reaction L-seryl-[protein] + ATP = O-phospho-L-seryl-[protein] + ADP + H(+). It catalyses the reaction L-threonyl-[protein] + ATP = O-phospho-L-threonyl-[protein] + ADP + H(+). Its function is as follows. This protein is a negative regulator of both sexual conjugation and meiosis. It phosphorylates mei2. It blocks the onset of meiosis until conjugation takes place. This Schizosaccharomyces pombe (strain 972 / ATCC 24843) (Fission yeast) protein is Negative regulator of sexual conjugation and meiosis (ran1).